Here is a 240-residue protein sequence, read N- to C-terminus: Uridylate kinase (240 aa).

12–15 serves as a coordination point for ATP; that stretch reads KLSG. Residues 20–25 are involved in allosteric activation by GTP; it reads GEKGFG. Position 54 (G54) interacts with UMP. ATP is bound by residues G55 and R59. UMP is bound by residues D74 and 135–142; that span reads TGSPYFST. ATP contacts are provided by N163, Y169, and D172.

It belongs to the UMP kinase family. In terms of assembly, homohexamer.

It is found in the cytoplasm. The catalysed reaction is UMP + ATP = UDP + ADP. It participates in pyrimidine metabolism; CTP biosynthesis via de novo pathway; UDP from UMP (UMPK route): step 1/1. With respect to regulation, allosterically activated by GTP. Inhibited by UTP. In terms of biological role, catalyzes the reversible phosphorylation of UMP to UDP. This Lactiplantibacillus plantarum (strain ATCC BAA-793 / NCIMB 8826 / WCFS1) (Lactobacillus plantarum) protein is Uridylate kinase.